A 280-amino-acid chain; its full sequence is Protein lyl-1 (280 aa).

Residues 1–60 (MCPPQAQAEVGPTMTEKAEMVCAPSPAPAPPPKPASPGPPQVEEVGHRGGSSPPRLPPGV) are disordered. Positions 25 to 40 (SPAPAPPPKPASPGPP) are enriched in pro residues. One can recognise a bHLH domain in the interval 150–202 (ARRVFTNSRERWRQQNVNGAFAELRKLLPTHPPDRKLSKNEVLRLAMKYIGFL). Residues 214-280 (AAGPTPPGPR…EQTALSPEVR (67 aa)) form a disordered region. Over residues 229 to 245 (RVPDDGARRGSGRRAEA) the composition is skewed to basic and acidic residues. A compositionally biased stretch (low complexity) spans 257–267 (PDGSPGGAARP). Residues S260 and S276 each carry the phosphoserine modification.

As to quaternary structure, efficient DNA binding requires dimerization with another bHLH protein.

It localises to the nucleus. The protein is Protein lyl-1 (LYL1) of Homo sapiens (Human).